The sequence spans 411 residues: Secretion apparatus protein BsaZ (411 aa).

The next 4 helical transmembrane spans lie at 28–48 (IVAL…VDLT), 80–100 (IAAP…LVQS), 137–157 (ALLY…LYHA), and 175–195 (IVLT…VLIL). Positions 341-411 (AANRGGPPPE…APARTGDQNA (71 aa)) are disordered. The span at 370 to 404 (DACADNAFPDDAPPGAAAPNAGSPDGPAPDGGAPA) shows a compositional bias: low complexity.

The protein belongs to the type III secretion exporter family.

The protein resides in the cell membrane. Functionally, part of the bsa type III secretion system, is involved in the intracellular replication of invading bacteria inside the host cell. Probably necessary for the lysis of the vacuole membrane and escape into the host cell cytoplasm. In Burkholderia pseudomallei (strain 1026b), this protein is Secretion apparatus protein BsaZ (bsaZ).